The sequence spans 447 residues: Glutamine synthetase (447 aa).

Residues 20 to 105 (RDVKFIRTQF…ILGDVYLPDG (86 aa)) enclose the GS beta-grasp domain. The 336-residue stretch at 112–447 (PRYVLKTAIK…WELSRYLSML (336 aa)) folds into the GS catalytic domain. Positions 135 and 137 each coordinate Mg(2+). An ATP-binding site is contributed by Glu-187. Mg(2+) contacts are provided by Glu-192 and Glu-199. Residues 243–244 (NG) and Gly-244 contribute to the L-glutamate site. His-248 serves as a coordination point for Mg(2+). An ATP-binding site is contributed by Ser-252. Positions 301, 307, and 319 each coordinate L-glutamate. 2 residues coordinate ATP: Arg-319 and Arg-324. Glu-336 is a Mg(2+) binding site. Position 338 (Arg-338) interacts with L-glutamate.

The protein belongs to the glutamine synthetase family. As to quaternary structure, homohexamer. Interacts and forms stable complexes with the regulatory protein GlnK1. The cofactor is Mg(2+).

The protein resides in the cytoplasm. It carries out the reaction L-glutamate + NH4(+) + ATP = L-glutamine + ADP + phosphate + H(+). Directly stimulated by the effector molecule 2-oxoglutarate. Inhibited by GlnK1. 2-oxoglutarate antagonizes the inhibitory effects of GlnK1, but does not prevent GlnK1/GlnA1 complex formation. Probably involved in nitrogen metabolism via ammonium assimilation. Catalyzes the ATP-dependent biosynthesis of glutamine from glutamate and ammonia. This chain is Glutamine synthetase, found in Methanosarcina mazei (strain ATCC BAA-159 / DSM 3647 / Goe1 / Go1 / JCM 11833 / OCM 88) (Methanosarcina frisia).